The sequence spans 39 residues: Neuropeptide F (39 aa).

Phe39 is modified (phenylalanine amide).

This sequence belongs to the NPY family. In terms of tissue distribution, neuronal somata and fibers.

The protein resides in the secreted. May have an important physiological role in neuroregulation. This Cornu aspersum (Brown garden snail) protein is Neuropeptide F.